The chain runs to 360 residues: MRAVTWAIVAMLLPRVLGAIPTRTPRTGGVGDTLSVAIVCHDLESVEVTWGPGSAHHGLSANLSLEFRYGNQVPQPCPHYFLLDSVRAGCVLPMGKGLLEVVLREGGGAKLFSRKKKASAWLRPRPPWNVTLSWVGDTVAVSCPSHSYPGLEYEVQHRDDFDPEWQSTSAPFCNLTVGGLDPGRCYDFRVRATPQDFYYGPEARPSKWTGVASLQGVGPTGSCTGPTLPRTPGTPTPPLALACGLAVALLTLVLLLALLRMRRVKEALLPGVPDPRGSFPGLFEKHHGNFQAWIADSQAAVPTVPEQDKDDDVIRPQTKGVETQEDDDVIAPGSPCLGGGALMSVGGASFLMGDSGYTTL.

The signal sequence occupies residues 1 to 18 (MRAVTWAIVAMLLPRVLG). The Extracellular portion of the chain corresponds to 27–238 (TGGVGDTLSV…PRTPGTPTPP (212 aa)). N62 carries N-linked (GlcNAc...) asparagine glycosylation. C77 and C90 are disulfide-bonded. Residues 123 to 214 (RPRPPWNVTL…PSKWTGVASL (92 aa)) form the Fibronectin type-III domain. N129 and N174 each carry an N-linked (GlcNAc...) asparagine glycan. The cysteines at positions 185 and 223 are disulfide-linked. The WSXWS motif signature appears at 205-209 (PSKWT). A helical transmembrane segment spans residues 239 to 259 (LALACGLAVALLTLVLLLALL). The Cytoplasmic segment spans residues 260 to 360 (RMRRVKEALL…LMGDSGYTTL (101 aa)). Residues 268–276 (LLPGVPDPR) carry the Box 1 motif motif.

This sequence belongs to the type I cytokine receptor family. Type 5 subfamily. As to quaternary structure, heterodimer of CRLF2 and IL7R. Expressed in all tissues examined including brain, thymus, lung, heart, muscle, stomach, small intestine, liver, kidney, spleen, testis and skin. Highest levels in thymus, liver and testis.

It localises to the membrane. Functionally, receptor for thymic stromal lymphopoietin (TSLP). Forms a functional complex with TSLP and IL7R which is capable of stimulating cell proliferation through activation of STAT3 and STAT5. Also activates JAK2. Implicated in the development of the hematopoietic system. The protein is Cytokine receptor-like factor 2 (Crlf2) of Rattus norvegicus (Rat).